The chain runs to 145 residues: MLNEFKAFIARGNVMDLAVGVIIGGAFGGIVKSLVDDLIMPIVGAIFGGFDFSNYFLPLSSAVNAPTLAAARAQGAVFAYGSFLTVLINFLILAWIIFLMVKGVNYLRMQVERQEEAAPEELPPPPADVQLLTEIRDLLARRPAV.

The next 3 helical transmembrane spans lie at 14–34 (VMDLAVGVIIGGAFGGIVKSL), 38–58 (LIMPIVGAIFGGFDFSNYFLP), and 81–101 (GSFLTVLINFLILAWIIFLMV).

Belongs to the MscL family. As to quaternary structure, homopentamer.

It localises to the cell inner membrane. Functionally, channel that opens in response to stretch forces in the membrane lipid bilayer. May participate in the regulation of osmotic pressure changes within the cell. The chain is Large-conductance mechanosensitive channel from Rhizobium etli (strain CIAT 652).